Reading from the N-terminus, the 524-residue chain is 2-isopropylmalate synthase (524 aa).

The Pyruvate carboxyltransferase domain occupies 15–277 (VVIFDTTMRD…ETKIDTTHIT (263 aa)). The Mn(2+) site is built by aspartate 24, histidine 212, histidine 214, and asparagine 248. Residues 401–524 (RVQRLRVVAG…RPEAAIASGF (124 aa)) are regulatory domain.

It belongs to the alpha-IPM synthase/homocitrate synthase family. LeuA type 1 subfamily. Homodimer. Mn(2+) serves as cofactor.

It localises to the cytoplasm. The catalysed reaction is 3-methyl-2-oxobutanoate + acetyl-CoA + H2O = (2S)-2-isopropylmalate + CoA + H(+). It functions in the pathway amino-acid biosynthesis; L-leucine biosynthesis; L-leucine from 3-methyl-2-oxobutanoate: step 1/4. Its function is as follows. Catalyzes the condensation of the acetyl group of acetyl-CoA with 3-methyl-2-oxobutanoate (2-ketoisovalerate) to form 3-carboxy-3-hydroxy-4-methylpentanoate (2-isopropylmalate). This Caulobacter sp. (strain K31) protein is 2-isopropylmalate synthase.